The chain runs to 193 residues: Ferredoxin-2, mitochondrial (193 aa).

Residues 38–70 (QATPEKLETSNEEEGSSSAQITAGVESDAENQR) are disordered. The 2Fe-2S ferredoxin-type domain maps to 78 to 180 (VEVVFLDRSG…GAEFTLPKIT (103 aa)). [2Fe-2S] cluster is bound by residues C115, C121, C124, and C161.

This sequence belongs to the adrenodoxin/putidaredoxin family. In terms of assembly, component of the mitochondrial core iron-sulfur cluster (ISC) complex composed of NFS1, LYRM4, NDUFAB1, ISCU, FXN, and FDX2; this complex is a heterohexamer containing two copies of each monomer. The cofactor is [2Fe-2S] cluster.

The protein localises to the mitochondrion. It localises to the mitochondrion matrix. Electron donor, of the core iron-sulfur cluster (ISC) assembly complex, that acts to reduce the persulfide into sulfide during [2Fe-2S] clusters assembly on the scaffolding protein ISCU. The core iron-sulfur cluster (ISC) assembly complex is involved in the de novo synthesis of a [2Fe-2S] cluster, the first step of the mitochondrial iron-sulfur protein biogenesis. This process is initiated by the cysteine desulfurase complex (NFS1:LYRM4:NDUFAB1) that produces persulfide which is delivered on the scaffold protein ISCU in a FXN-dependent manner. Then this complex is stabilized by FDX2 which provides reducing equivalents to accomplish the [2Fe-2S] cluster assembly. Finally, the [2Fe-2S] cluster is transferred from ISCU to chaperone proteins, including HSCB, HSPA9 and GLRX5. Essential for coenzyme Q biosynthesis: together with FDXR, transfers the electrons required for the hydroxylation reaction performed by COQ6. In Xenopus laevis (African clawed frog), this protein is Ferredoxin-2, mitochondrial.